A 702-amino-acid polypeptide reads, in one-letter code: Neurochondrin (702 aa).

This sequence belongs to the neurochondrin family.

It is found in the cytoplasm. The protein resides in the cytosol. It localises to the cell projection. The protein localises to the dendrite. Its subcellular location is the postsynapse. In terms of biological role, probably involved in signal transduction, in the nervous system. Required for the spatial learning process. May also be involved in neurite outgrowth. The protein is Neurochondrin (NCDN) of Gallus gallus (Chicken).